The following is a 1279-amino-acid chain: Sterol regulatory element-binding protein cleavage-activating protein (1279 aa).

Residues 1 to 18 (MTLTERLREKISRAFYNH) are Cytoplasmic-facing. The helical transmembrane segment at 19–39 (GLLCASYPIPIILFTGFCILA) threads the bilayer. At 40–279 (CCYPLLKLPL…SLVHVHFKEE (240 aa)) the chain is on the lumenal side. Positions 46 to 284 (KLPLPGTGPV…HFKEEIGVAE (239 aa)) are loop-1. A disordered region spans residues 60-80 (PVKDYSPPPVDSDRKQGEPTE). Asparagine 263 carries N-linked (GlcNAc...) asparagine glycosylation. Residues 280-300 (IGVAELIPLVTTYIILFAYIY) traverse the membrane as a helical segment. The SSD domain maps to 284 to 442 (ELIPLVTTYI…MLFFTTVLSI (159 aa)). At 301 to 312 (FSTRKIDMVKSK) the chain is on the cytoplasmic side. The chain crosses the membrane as a helical span at residues 313 to 333 (WGLALAAVVTVLSSLLMSVGL). Topologically, residues 334-344 (CTLFGLTPTLN) are lumenal. Residues 345–365 (GGEIFPYLVVVIGLENVLVLT) traverse the membrane as a helical segment. Topologically, residues 366–401 (KSVVSTPVDLEVKLRIAQGLSSESWSIMKNMATELG) are cytoplasmic. A helical transmembrane segment spans residues 402–422 (IILIGYFTLVPAIQEFCLFAV). Valine 423 is a topological domain (lumenal). The chain crosses the membrane as a helical span at residues 424 to 444 (GLVSDFFLQMLFFTTVLSIDI). The Cytoplasmic segment spans residues 445–518 (RRMELADLNK…FLARTRLAQR (74 aa)). The ER export signal motif lies at 447-452 (MELADL). Glycyl lysine isopeptide (Lys-Gly) (interchain with G-Cter in ubiquitin) cross-links involve residues lysine 454 and lysine 466. Residues 519–539 (LIMAGTVVWIGILVYTDPAGL) form a helical membrane-spanning segment. Residues 535–710 (DPAGLRNYLA…QAHGDVTLYK (176 aa)) are loop-7. Residues 540 to 709 (RNYLAAQVTE…VQAHGDVTLY (170 aa)) lie on the Lumenal side of the membrane. Positions 579–615 (IFPPDAPKLPENQTSPGESPERGGPAEVVHDSPVPEV) are disordered. Residues asparagine 590 and asparagine 641 are each glycosylated (N-linked (GlcNAc...) asparagine). The segment at 668–696 (EGRHPQDGRSAWPPPGPIPAGHWEAGPKG) is disordered. The chain crosses the membrane as a helical span at residues 710-730 (KVAALGLATGIVLVLLLLCLY). Residues 731 to 1279 (RVLCPRNYGQ…YVPSVLEKLD (549 aa)) lie on the Cytoplasmic side of the membrane. Positions 731-1279 (RVLCPRNYGQ…YVPSVLEKLD (549 aa)) are interaction with SREBF2. The stretch at 771–811 (VLRGHLMDIECLASDGMLLVSCCLAGHVCVWDAQTGDCLTR) is one WD 1 repeat. A disordered region spans residues 811-904 (RIPRPGRQRR…PRHRAVCGRS (94 aa)). Residues serine 822, serine 838, and serine 851 each carry the phosphoserine modification. A compositionally biased stretch (polar residues) spans 877 to 891 (IDTNFSAQPRSSQPT). A phosphoserine mark is found at serine 907 and serine 937. Residues 931–962 (PALRPPSPGPVLSQAPEDEGGSPEKGSPSLAW) are disordered. 2 WD repeats span residues 952–1002 (SPEK…LCCS) and 1005–1042 (EVSSGITALVFLDKRIVAARLNGSLDFFSLETHTALSP). Position 1051 is an omega-N-methylarginine (arginine 1051). 4 WD repeats span residues 1077–1114 (AHQKPITALKAAAGRLVTGSQDHTLRVFRLEDSCCLFT), 1117–1155 (GHSGAITTVYIDQTMVLASGGQDGAICLWDVLTGSRVSH), 1158–1195 (AHRGDVTSLTCTTSCVISSGLDDLISIWDRSTGIKFYS), and 1197–1235 (QQDLGCGASLGVISDNLLVTGGQGCVSFWDLNYGDLLQT).

The protein belongs to the WD repeat SCAP family. As to quaternary structure, membrane region forms a homotetramer. Component of the SCAP-SREBP complex (composed of SCAP and SREBF1/SREBP1 or SREBF2/SREBP2); interacts with SREBF1/SREBP1 or SREBF2/SREBP2 through its C-terminal cytoplasmic domain. Forms a ternary complex with INSIG1 or INSIG2 through its transmembrane domains at high sterol concentrations. Interacts with PAQR3; the interaction anchors the SCAP-SREBP complex to the Golgi apparatus in low cholesterol conditions. Interacts with the SEC23-SEC24 complex in a SAR1-GTP-dependent manner through an ER export signal in its third cytoplasmic loop. Interacts with RNF139; the interaction inhibits the interaction of SCAP with SEC24B and hampering the ER to Golgi transport of the SCAP-SREBP complex. Interacts with SPRING1. Post-translationally, ubiquitinated at Lys-454 and Lys-466. RNF145 triggers ubiquitination of SCAP, likely inhibiting SCAP-SREBP complex transport to the Golgi apparatus and the subsequent processing/maturation of SREBF2/SREBP2.

It localises to the endoplasmic reticulum membrane. Its subcellular location is the golgi apparatus membrane. The protein resides in the cytoplasmic vesicle. It is found in the COPII-coated vesicle membrane. Its function is as follows. Escort protein required for cholesterol as well as lipid homeostasis. Regulates export of the SCAP-SREBP complex from the endoplasmic reticulum to the Golgi upon low cholesterol, thereby regulating the processing of sterol regulatory element-binding proteins (SREBPs) SREBF1/SREBP1 and SREBF2/SREBP2. At high sterol concentrations, formation of a ternary complex with INSIG (INSIG1 or INSIG2) leads to mask the ER export signal in SCAP, promoting retention of the complex in the endoplasmic reticulum. Low sterol concentrations trigger release of INSIG, a conformational change in the SSD domain of SCAP, unmasking of the ER export signal, promoting recruitment into COPII-coated vesicles and transport of the SCAP-SREBP to the Golgi: in the Golgi, SREBPs are then processed, releasing the transcription factor fragment of SREBPs from the membrane, its import into the nucleus and up-regulation of LDLR, INSIG1 and the mevalonate pathway. Binds cholesterol via its SSD domain. This chain is Sterol regulatory element-binding protein cleavage-activating protein, found in Homo sapiens (Human).